The following is a 338-amino-acid chain: Large ribosomal subunit protein uL10 (338 aa).

The disordered stretch occupies residues 292-338 (LDDDLKERVSSTASAVEAKEEEAPKEEKEEEKEEEEEAPAAGLGMLF). Residues 308-318 (EAKEEEAPKEE) show a composition bias toward basic and acidic residues. A compositionally biased stretch (acidic residues) spans 319–329 (KEEEKEEEEEA).

Belongs to the universal ribosomal protein uL10 family. In terms of assembly, part of the 50S ribosomal subunit. Forms part of the ribosomal stalk which helps the ribosome interact with GTP-bound translation factors. Forms a heptameric L10(L12)2(L12)2(L12)2 complex, where L10 forms an elongated spine to which the L12 dimers bind in a sequential fashion.

Functionally, forms part of the ribosomal stalk, playing a central role in the interaction of the ribosome with GTP-bound translation factors. The polypeptide is Large ribosomal subunit protein uL10 (Methanococcus aeolicus (strain ATCC BAA-1280 / DSM 17508 / OCM 812 / Nankai-3)).